A 268-amino-acid polypeptide reads, in one-letter code: Small ribosomal subunit protein eS1 (268 aa).

Residues 1–21 form a disordered region; it reads MAVGKNKGLSKGGKKGGKKKV.

Belongs to the eukaryotic ribosomal protein eS1 family. As to quaternary structure, component of the small ribosomal subunit. Mature ribosomes consist of a small (40S) and a large (60S) subunit. The 40S subunit contains about 33 different proteins and 1 molecule of RNA (18S). The 60S subunit contains about 49 different proteins and 3 molecules of RNA (28S, 5.8S and 5S).

It is found in the cytoplasm. Essential for oogenesis; required for late follicle cell development. The polypeptide is Small ribosomal subunit protein eS1 (Drosophila persimilis (Fruit fly)).